A 91-amino-acid chain; its full sequence is Probable Fe(2+)-trafficking protein (91 aa).

It belongs to the Fe(2+)-trafficking protein family.

Could be a mediator in iron transactions between iron acquisition and iron-requiring processes, such as synthesis and/or repair of Fe-S clusters in biosynthetic enzymes. The protein is Probable Fe(2+)-trafficking protein of Burkholderia mallei (strain NCTC 10247).